A 38-amino-acid chain; its full sequence is Photosystem II reaction center protein M (38 aa).

A helical membrane pass occupies residues 7–27 (GFVASILFVLVPSVFLIILYI).

This sequence belongs to the PsbM family. PSII is composed of 1 copy each of membrane proteins PsbA, PsbB, PsbC, PsbD, PsbE, PsbF, PsbH, PsbI, PsbJ, PsbK, PsbL, PsbM, PsbT, PsbX, PsbY, PsbZ, Psb30/Ycf12, peripheral proteins PsbO, CyanoQ (PsbQ), PsbU, PsbV and a large number of cofactors. It forms dimeric complexes.

It is found in the cellular thylakoid membrane. Functionally, one of the components of the core complex of photosystem II (PSII). PSII is a light-driven water:plastoquinone oxidoreductase that uses light energy to abstract electrons from H(2)O, generating O(2) and a proton gradient subsequently used for ATP formation. It consists of a core antenna complex that captures photons, and an electron transfer chain that converts photonic excitation into a charge separation. This subunit is found at the monomer-monomer interface. In Nostoc sp. (strain PCC 7120 / SAG 25.82 / UTEX 2576), this protein is Photosystem II reaction center protein M.